A 457-amino-acid polypeptide reads, in one-letter code: tRNA-2-methylthio-N(6)-dimethylallyladenosine synthase (457 aa).

In terms of domain architecture, MTTase N-terminal spans lysine 3–glutamate 120. Residues cysteine 12, cysteine 49, cysteine 83, cysteine 157, cysteine 161, and cysteine 164 each contribute to the [4Fe-4S] cluster site. The 235-residue stretch at arginine 143–arginine 377 folds into the Radical SAM core domain. Residues aspartate 380–leucine 447 enclose the TRAM domain.

This sequence belongs to the methylthiotransferase family. MiaB subfamily. Monomer. Requires [4Fe-4S] cluster as cofactor.

The protein resides in the cytoplasm. It catalyses the reaction N(6)-dimethylallyladenosine(37) in tRNA + (sulfur carrier)-SH + AH2 + 2 S-adenosyl-L-methionine = 2-methylsulfanyl-N(6)-dimethylallyladenosine(37) in tRNA + (sulfur carrier)-H + 5'-deoxyadenosine + L-methionine + A + S-adenosyl-L-homocysteine + 2 H(+). Its function is as follows. Catalyzes the methylthiolation of N6-(dimethylallyl)adenosine (i(6)A), leading to the formation of 2-methylthio-N6-(dimethylallyl)adenosine (ms(2)i(6)A) at position 37 in tRNAs that read codons beginning with uridine. The chain is tRNA-2-methylthio-N(6)-dimethylallyladenosine synthase from Paraburkholderia xenovorans (strain LB400).